A 138-amino-acid polypeptide reads, in one-letter code: Cysteine desulfuration protein SufE (138 aa).

The Cysteine persulfide intermediate role is filled by Cys-51.

Belongs to the SufE family. As to quaternary structure, homodimer. Interacts with SufS.

It is found in the cytoplasm. The protein operates within cofactor biosynthesis; iron-sulfur cluster biosynthesis. Functionally, participates in cysteine desulfuration mediated by SufS. Cysteine desulfuration mobilizes sulfur from L-cysteine to yield L-alanine and constitutes an essential step in sulfur metabolism for biosynthesis of a variety of sulfur-containing biomolecules. Functions as a sulfur acceptor for SufS, by mediating the direct transfer of the sulfur atom from the S-sulfanylcysteine of SufS, an intermediate product of cysteine desulfuration process. In Klebsiella pneumoniae (strain 342), this protein is Cysteine desulfuration protein SufE.